A 537-amino-acid polypeptide reads, in one-letter code: Lariat debranching enzyme (537 aa).

The a divalent metal cation site is built by C8, H10, D39, and N84. Residues S124–R154 are lariat recognition loop. 3 residues coordinate a divalent metal cation: H174, H226, and H228. 2 disordered regions span residues K242–P272 and T473–D537. Low complexity predominate over residues S251–S260.

Belongs to the lariat debranching enzyme family. Fe(2+) serves as cofactor. The cofactor is Zn(2+). It depends on Mn(2+) as a cofactor.

Its subcellular location is the nucleus. With respect to regulation, active in presence of diverse metals including Fe(2+), Zn(2+), Mn(2+). Binds two metal cations in two adjacent alpha and beta metal-binding pockets. Its function is as follows. Cleaves the 2'-5' phosphodiester linkage at the branch point of lariat intron pre-mRNAs after splicing and converts them into linear molecules that are subsequently degraded. It thereby facilitates ribonucleotide turnover. The sequence is that of Lariat debranching enzyme (DBR1) from Drosophila pseudoobscura pseudoobscura (Fruit fly).